The sequence spans 271 residues: Colicin-M (271 aa).

The short motif at glutamate 2–proline 9 is the TonB box element.

Functionally, colicins are polypeptide toxins produced by and active against E.coli and closely related bacteria. Its function is as follows. This is a calcium-requiring inhibitor for murein biosynthesis; it causes lysis of sensitive cells accompanied by murein degradation. The target site is possibly the cytoplasmic membrane. The chain is Colicin-M (cma) from Escherichia coli.